A 1406-amino-acid polypeptide reads, in one-letter code: Sterol 3-beta-glucosyltransferase (1406 aa).

Residues 83-231 form a disordered region; it reads ARFDESSDSD…IHSSHESSTS (149 aa). The segment covering 110 to 128 has biased composition (polar residues); that stretch reads GSSNPVNSQTEQRSGSQTS. Residues 209 to 231 are compositionally biased toward low complexity; that stretch reads SAGRSQNSSQESSIHSSHESSTS. A GRAM 1 domain is found at 236-286; it reads RLMEMFDFNKPEKVLVEYACSLLQSMLLQGYMYVTEGHICFYAYLPRKSTV. The 100-residue stretch at 286–385 folds into the PH domain; that stretch reads VAIKSGYLHK…WVKALQKVIF (100 aa). 2 disordered regions span residues 457-558 and 576-622; these read ASGH…AESA and LDKR…DGKP. The segment covering 468–478 has biased composition (basic and acidic residues); sequence HADRSPRSDRT. Composition is skewed to polar residues over residues 490 to 499 and 531 to 548; these read GTSQPGNGSA and SESI…SAVW. The span at 576–587 shows a compositional bias: basic and acidic residues; the sequence is LDKRACSDERSG. The region spanning 730–796 is the GRAM 2 domain; the sequence is DRFRAHFALP…KDVENVEKEK (67 aa). Positions 917, 918, 920, 1220, 1222, 1235, 1239, 1240, 1259, and 1260 each coordinate UDP-alpha-D-glucose. The segment at 1334–1406 is disordered; that stretch reads QRSIASSTPF…LTNSIHGAGR (73 aa). Positions 1336–1349 are enriched in low complexity; it reads SIASSTPFSPTPSA. Acidic residues predominate over residues 1355–1375; the sequence is QGDDDVEDSEEWTFVGDDNEM. The span at 1376 to 1387 shows a compositional bias: basic and acidic residues; the sequence is DMSRRMRDRAIS. A compositionally biased stretch (polar residues) spans 1397-1406; it reads LTNSIHGAGR.

This sequence belongs to the glycosyltransferase 28 family.

The protein localises to the cytoplasm. It is found in the preautophagosomal structure membrane. It carries out the reaction a sterol + UDP-alpha-D-glucose = a sterol 3-beta-D-glucoside + UDP + H(+). The enzyme catalyses ergosterol + UDP-alpha-D-glucose = ergosteryl 3-beta-D-glucoside + UDP + H(+). Its function is as follows. Sterol glycosyltransferase responsible for the glycosylation of ergosterol to form ergosterol-glucoside. The sequence is that of Sterol 3-beta-glucosyltransferase from Aspergillus clavatus (strain ATCC 1007 / CBS 513.65 / DSM 816 / NCTC 3887 / NRRL 1 / QM 1276 / 107).